The following is a 384-amino-acid chain: 3,7-dimethylxanthine N-methyltransferase 1 (384 aa).

Residues Tyr-18, Cys-61, Asn-66, Asp-100, Leu-101, Ser-139, Phe-140, and Cys-156 each contribute to the S-adenosyl-L-homocysteine site. Residue Tyr-157 participates in theobromine binding. Cys-158 serves as a coordination point for S-adenosyl-L-homocysteine. Theobromine-binding residues include His-160 and Trp-161. Mg(2+) is bound at residue Asn-178. Theobromine is bound at residue Ser-237. Mg(2+) contacts are provided by Asp-260, Phe-262, and Asn-263. Tyr-368 is a theobromine binding site.

The protein belongs to the methyltransferase superfamily. Type-7 methyltransferase family. It depends on Mg(2+) as a cofactor. Highly expressed in developing endosperm and immature fruits (grains). Detected in young leaves and flower buds, but not in mature fruits.

The catalysed reaction is theobromine + S-adenosyl-L-methionine = caffeine + S-adenosyl-L-homocysteine + H(+). The enzyme catalyses 1,7-dimethylxanthine + S-adenosyl-L-methionine = caffeine + S-adenosyl-L-homocysteine + H(+). It catalyses the reaction 7-methylxanthine + S-adenosyl-L-methionine = theobromine + S-adenosyl-L-homocysteine + H(+). Its pathway is alkaloid biosynthesis. Involved in the biosynthesis of caffeine. Catalyzes the conversion of 7-methylxanthine to caffeine, likely via theobromine as an intermediate. The protein is 3,7-dimethylxanthine N-methyltransferase 1 of Coffea arabica (Arabian coffee).